The sequence spans 547 residues: Chaperonin GroEL (547 aa).

ATP contacts are provided by residues 30–33 (TLGP), Lys-51, 87–91 (DGTTT), Gly-414, 478–480 (NAA), and Asp-494.

The protein belongs to the chaperonin (HSP60) family. Forms a cylinder of 14 subunits composed of two heptameric rings stacked back-to-back. Interacts with the co-chaperonin GroES.

Its subcellular location is the cytoplasm. The catalysed reaction is ATP + H2O + a folded polypeptide = ADP + phosphate + an unfolded polypeptide.. Its function is as follows. Together with its co-chaperonin GroES, plays an essential role in assisting protein folding. The GroEL-GroES system forms a nano-cage that allows encapsulation of the non-native substrate proteins and provides a physical environment optimized to promote and accelerate protein folding. The sequence is that of Chaperonin GroEL from Klebsiella pneumoniae.